A 343-amino-acid chain; its full sequence is Heat-inducible transcription repressor HrcA (343 aa).

Belongs to the HrcA family.

Negative regulator of class I heat shock genes (grpE-dnaK-dnaJ and groELS operons). Prevents heat-shock induction of these operons. The chain is Heat-inducible transcription repressor HrcA from Clostridium botulinum (strain Alaska E43 / Type E3).